We begin with the raw amino-acid sequence, 192 residues long: Adenylate kinase (192 aa).

10–15 (GAGKGT) is an ATP binding site. Positions 30–59 (STGDMLRTAVAQATEVGKRAKAVMDAGQLV) are NMP. AMP is bound by residues threonine 31, arginine 36, 57–59 (QLV), 85–88 (GYPR), and glutamine 92. The interval 126-142 (NRVTETVAAGGTVRSDD) is LID. Arginine 127 provides a ligand contact to ATP. Residues arginine 139 and arginine 150 each contribute to the AMP site. ATP is bound at residue alanine 178.

This sequence belongs to the adenylate kinase family. In terms of assembly, monomer.

It localises to the cytoplasm. It carries out the reaction AMP + ATP = 2 ADP. Its pathway is purine metabolism; AMP biosynthesis via salvage pathway; AMP from ADP: step 1/1. Functionally, catalyzes the reversible transfer of the terminal phosphate group between ATP and AMP. Plays an important role in cellular energy homeostasis and in adenine nucleotide metabolism. This Rhizobium meliloti (strain 1021) (Ensifer meliloti) protein is Adenylate kinase.